Here is a 374-residue protein sequence, read N- to C-terminus: DNA replication and repair protein RecF (374 aa).

Residue 34–41 (GDNGAGKT) coordinates ATP.

Belongs to the RecF family.

The protein resides in the cytoplasm. The RecF protein is involved in DNA metabolism; it is required for DNA replication and normal SOS inducibility. RecF binds preferentially to single-stranded, linear DNA. It also seems to bind ATP. The protein is DNA replication and repair protein RecF of Rhizobium johnstonii (strain DSM 114642 / LMG 32736 / 3841) (Rhizobium leguminosarum bv. viciae).